Consider the following 491-residue polypeptide: MKMAAPTANKAASLGCNNKPAFPELDFRSGARVEELNKLIQEFTKHDQREYDDQRALEIHTAKDFIFSMLGMVQKLDQKLPVANEYLLLSGGVREGVVDLDLDELNVYARGTDYDMDFTLLVPALKLHDRNQPVTLDMRHSALCHSWLSLRLFDEGTISKWKDCCTIVDHINGATNYFFSPTKVADWFYDSISIVLSEIQKKPQRGMPKVEKVEKNGTIISIILGVGSSRMLYDIVPVVSFKGWPAVAQSWLMENHFWDGKITEEEVISGFYLVPACSYKGKKDNEWRLSFARSEVQLKKCISSSLMQAYQACKAIIIKLLSRPKAISPYHLRSMMLWACDRLPANYLAQEDYAAHFLLGLIDDLQHCLVNKMCPNYFIPQCNMLEHLSEETVMLHARKLSSVRSDPAEHLRTAIEHVKAANRLTLELQRRGSTTSIPSPQSDGGDPNQPDDRLAKKLQQLVTENPGKSISVFINPDDVTRPHFRIDDKFF.

Positions 431-442 (RGSTTSIPSPQS) are enriched in polar residues. The segment at 431 to 452 (RGSTTSIPSPQSDGGDPNQPDD) is disordered. The residue at position 435 (Thr-435) is a Phosphothreonine. 3 positions are modified to phosphoserine: Ser-436, Ser-439, and Ser-442.

Belongs to the mab-21 family.

Probable nucleotidyltransferase that catalyzes the formation of cyclic dinucleotide second messenger in response to some unknown stimulus. The sequence is that of Nucleotidyltransferase MB21D2 from Homo sapiens (Human).